The following is a 278-amino-acid chain: Sulfur carrier protein FdhD (278 aa).

The Cysteine persulfide intermediate role is filled by cysteine 120.

The protein belongs to the FdhD family.

It is found in the cytoplasm. Its function is as follows. Required for formate dehydrogenase (FDH) activity. Acts as a sulfur carrier protein that transfers sulfur from IscS to the molybdenum cofactor prior to its insertion into FDH. The chain is Sulfur carrier protein FdhD from Bordetella petrii (strain ATCC BAA-461 / DSM 12804 / CCUG 43448).